We begin with the raw amino-acid sequence, 431 residues long: 5-methylthioadenosine/S-adenosylhomocysteine deaminase (431 aa).

Histidine 68 and histidine 70 together coordinate Zn(2+). Substrate is bound by residues glutamate 97 and histidine 186. Position 213 (histidine 213) interacts with Zn(2+). The substrate site is built by glutamate 216 and aspartate 301. Position 301 (aspartate 301) interacts with Zn(2+).

It belongs to the metallo-dependent hydrolases superfamily. MTA/SAH deaminase family. Zn(2+) serves as cofactor.

The catalysed reaction is S-adenosyl-L-homocysteine + H2O + H(+) = S-inosyl-L-homocysteine + NH4(+). The enzyme catalyses S-methyl-5'-thioadenosine + H2O + H(+) = S-methyl-5'-thioinosine + NH4(+). Functionally, catalyzes the deamination of 5-methylthioadenosine and S-adenosyl-L-homocysteine into 5-methylthioinosine and S-inosyl-L-homocysteine, respectively. Is also able to deaminate adenosine. In Halothermothrix orenii (strain H 168 / OCM 544 / DSM 9562), this protein is 5-methylthioadenosine/S-adenosylhomocysteine deaminase.